The chain runs to 1565 residues: Major cell-surface adhesin PAc (1565 aa).

The N-terminal stretch at 1 to 38 (MKVKKTYGFRKSKISKTLCGAVLGTVAAVSVAGQKVFA) is a signal peptide. Residues 42 to 54 (TTTSDVDTKVVGT) are compositionally biased toward low complexity. The tract at residues 42–81 (TTTSDVDTKVVGTQTGNPATNLPEAQGSASKEAEQSQTKL) is disordered. Residues 72–81 (KEAEQSQTKL) are compositionally biased toward basic and acidic residues. Ag I/II A repeat units lie at residues 146 to 220 (KKTT…QKTN), 221 to 302 (AANQ…QEAN), 303 to 384 (AANE…KKAN), and 385 to 466 (AANE…QKDL). The segment at 203–448 (EAKLAQYQAD…KRNADAKADY (246 aa)) is heptad repeats of Y-[EQ]-X-X-L-A-X. Residues 461–834 (KYQKDLADYP…VNVPKVTKEK (374 aa)) form a V-region (lectin-like) region. 2 disordered regions span residues 827-985 (VPKV…PTPP) and 1486-1511 (NTVK…PRTS). Residues 848-887 (TYETEKPLKPAPVAPNYEKEPTPPTRTPDQAEPNKPTPPT) form a P1 repeat. The stretch at 888–926 (YETEKPLEPAPVEPSYEAEPTPPTRTPDQAEPNKPTPPT) is one P2 repeat. Residues 927-964 (YETEKPLEPAPVEPSYEAEPTPPTPTPDQPEPNKPVEP) form a P3 repeat. Residues 946-961 (PTPPTPTPDQPEPNKP) are compositionally biased toward pro residues. The LPXTG sorting signal signature appears at 1532–1536 (LPNTG). Residue Thr-1535 is modified to Pentaglycyl murein peptidoglycan amidated threonine. A propeptide spans 1536–1565 (GVTNNAYMPLLGIIGLVTSFSLLGLKAKKD) (removed by sortase).

This sequence belongs to the antigen I/II family.

The protein localises to the secreted. It is found in the cell wall. In terms of biological role, surface protein antigen implicated in dental caries. The polypeptide is Major cell-surface adhesin PAc (Streptococcus mutans).